A 117-amino-acid polypeptide reads, in one-letter code: UPF0295 protein RBAM_008830 (117 aa).

Helical transmembrane passes span 13–33 (TFAL…LFFK) and 41–61 (LFMI…FWIG).

The protein belongs to the UPF0295 family.

The protein localises to the cell membrane. The polypeptide is UPF0295 protein RBAM_008830 (Bacillus velezensis (strain DSM 23117 / BGSC 10A6 / LMG 26770 / FZB42) (Bacillus amyloliquefaciens subsp. plantarum)).